Here is a 414-residue protein sequence, read N- to C-terminus: tRNA N6-adenosine threonylcarbamoyltransferase, mitochondrial (414 aa).

The N-terminal 29 residues, 1 to 29, are a transit peptide targeting the mitochondrion; sequence MLMLSKTAGAIPRPPRSNVRGFIRRFNVQ. N6-acetyllysine occurs at positions 74 and 140. Positions 147 and 151 each coordinate a divalent metal cation. Residues 169 to 173 and aspartate 202 contribute to the substrate site; that span reads LISGG. N6-acetyllysine is present on lysine 203. Positions 222 and 226 each coordinate substrate. Residues lysine 230 and lysine 299 each carry the N6-acetyllysine modification. Substrate contacts are provided by residues 329-330 and threonine 357; that span reads SN. A divalent metal cation is bound at residue aspartate 358.

This sequence belongs to the KAE1 / TsaD family. Monomer. It depends on a divalent metal cation as a cofactor.

Its subcellular location is the mitochondrion. It catalyses the reaction L-threonylcarbamoyladenylate + adenosine(37) in tRNA = N(6)-L-threonylcarbamoyladenosine(37) in tRNA + AMP + H(+). Required for the formation of a threonylcarbamoyl group on adenosine at position 37 (t(6)A37) in mitochondrial tRNAs that read codons beginning with adenine. Probably involved in the transfer of the threonylcarbamoyl moiety of threonylcarbamoyl-AMP (TC-AMP) to the N6 group of A37. Involved in mitochondrial genome maintenance. The protein is tRNA N6-adenosine threonylcarbamoyltransferase, mitochondrial of Rattus norvegicus (Rat).